We begin with the raw amino-acid sequence, 237 residues long: Ribonuclease PH (237 aa).

Residues Arg-86 and 124-126 (GTR) contribute to the phosphate site.

This sequence belongs to the RNase PH family. As to quaternary structure, homohexameric ring arranged as a trimer of dimers.

The catalysed reaction is tRNA(n+1) + phosphate = tRNA(n) + a ribonucleoside 5'-diphosphate. Functionally, phosphorolytic 3'-5' exoribonuclease that plays an important role in tRNA 3'-end maturation. Removes nucleotide residues following the 3'-CCA terminus of tRNAs; can also add nucleotides to the ends of RNA molecules by using nucleoside diphosphates as substrates, but this may not be physiologically important. Probably plays a role in initiation of 16S rRNA degradation (leading to ribosome degradation) during starvation. This is Ribonuclease PH from Shewanella sediminis (strain HAW-EB3).